The following is a 71-amino-acid chain: Large ribosomal subunit protein bL31 (71 aa).

Zn(2+) contacts are provided by Cys16, Cys18, Cys36, and Cys39.

Belongs to the bacterial ribosomal protein bL31 family. Type A subfamily. Part of the 50S ribosomal subunit. Requires Zn(2+) as cofactor.

Binds the 23S rRNA. This Thermotoga sp. (strain RQ2) protein is Large ribosomal subunit protein bL31.